A 389-amino-acid chain; its full sequence is Ribonucleoside-diphosphate reductase subunit M2 (389 aa).

Ser20 is subject to Phosphoserine. Thr33 carries the post-translational modification Phosphothreonine. A Cy motif is present at residues Arg49–Ile51. Asp138, Glu169, and His172 together coordinate Fe cation. Residue Tyr176 is part of the active site. Positions 232, 266, and 269 each coordinate Fe cation.

Belongs to the ribonucleoside diphosphate reductase small chain family. Heterodimer of a large and a small subunit. Interacts (via Cy motif and when phosphorylated at Thr-33) with CCNF; the interaction occurs exclusively in G2 and early M. Requires Fe cation as cofactor. In terms of processing, phosphorylation on Ser-20 relieves the inhibitory effect on Wnt signaling. Phosphorylated on Thr-33 by CDK1 and CDK2; predominantly in G2 and M phase. Ubiquitinated by the SCF(CCNF) E3 ubiquitin-protein ligase complex; leading to its degradation by the proteasome.

Its subcellular location is the cytoplasm. The protein localises to the nucleus. It catalyses the reaction a 2'-deoxyribonucleoside 5'-diphosphate + [thioredoxin]-disulfide + H2O = a ribonucleoside 5'-diphosphate + [thioredoxin]-dithiol. Functionally, provides the precursors necessary for DNA synthesis. Catalyzes the biosynthesis of deoxyribonucleotides from the corresponding ribonucleotides. Inhibits Wnt signaling. This chain is Ribonucleoside-diphosphate reductase subunit M2 (RRM2), found in Macaca fascicularis (Crab-eating macaque).